Here is a 359-residue protein sequence, read N- to C-terminus: tRNA N6-adenosine threonylcarbamoyltransferase (359 aa).

Positions 121 and 125 each coordinate Fe cation. Substrate is bound by residues 143 to 147, aspartate 176, glycine 189, and asparagine 286; that span reads LVSGG. Fe cation is bound at residue aspartate 311.

Belongs to the KAE1 / TsaD family. It depends on Fe(2+) as a cofactor.

It is found in the cytoplasm. It carries out the reaction L-threonylcarbamoyladenylate + adenosine(37) in tRNA = N(6)-L-threonylcarbamoyladenosine(37) in tRNA + AMP + H(+). In terms of biological role, required for the formation of a threonylcarbamoyl group on adenosine at position 37 (t(6)A37) in tRNAs that read codons beginning with adenine. Is involved in the transfer of the threonylcarbamoyl moiety of threonylcarbamoyl-AMP (TC-AMP) to the N6 group of A37, together with TsaE and TsaB. TsaD likely plays a direct catalytic role in this reaction. This chain is tRNA N6-adenosine threonylcarbamoyltransferase, found in Jannaschia sp. (strain CCS1).